The chain runs to 340 residues: Glycerol-3-phosphate dehydrogenase [NAD(P)+] (340 aa).

NADPH contacts are provided by serine 13, tryptophan 14, and lysine 108. Residues lysine 108, glycine 139, and serine 141 each coordinate sn-glycerol 3-phosphate. An NADPH-binding site is contributed by alanine 143. The sn-glycerol 3-phosphate site is built by lysine 194, aspartate 247, serine 257, arginine 258, and asparagine 259. Lysine 194 serves as the catalytic Proton acceptor. Arginine 258 contributes to the NADPH binding site. NADPH is bound by residues valine 282 and glutamate 284.

The protein belongs to the NAD-dependent glycerol-3-phosphate dehydrogenase family.

It localises to the cytoplasm. The enzyme catalyses sn-glycerol 3-phosphate + NAD(+) = dihydroxyacetone phosphate + NADH + H(+). It catalyses the reaction sn-glycerol 3-phosphate + NADP(+) = dihydroxyacetone phosphate + NADPH + H(+). It participates in membrane lipid metabolism; glycerophospholipid metabolism. Functionally, catalyzes the reduction of the glycolytic intermediate dihydroxyacetone phosphate (DHAP) to sn-glycerol 3-phosphate (G3P), the key precursor for phospholipid synthesis. The sequence is that of Glycerol-3-phosphate dehydrogenase [NAD(P)+] from Streptococcus thermophilus (strain CNRZ 1066).